The primary structure comprises 358 residues: Alanine racemase (358 aa).

Residue lysine 35 is the Proton acceptor; specific for D-alanine of the active site. Lysine 35 carries the post-translational modification N6-(pyridoxal phosphate)lysine. Arginine 130 lines the substrate pocket. The active-site Proton acceptor; specific for L-alanine is the tyrosine 255. Residue methionine 303 coordinates substrate.

Belongs to the alanine racemase family. Pyridoxal 5'-phosphate is required as a cofactor.

The enzyme catalyses L-alanine = D-alanine. It participates in amino-acid biosynthesis; D-alanine biosynthesis; D-alanine from L-alanine: step 1/1. Its function is as follows. Catalyzes the interconversion of L-alanine and D-alanine. May also act on other amino acids. This Shewanella sp. (strain MR-7) protein is Alanine racemase (alr).